The primary structure comprises 544 residues: Protein nucleotidyltransferase YdiU (544 aa).

8 residues coordinate ATP: G133, G135, R136, K155, D167, G168, R218, and R225. D294 (proton acceptor) is an active-site residue. The Mg(2+) site is built by N295 and D304. D304 contacts ATP.

This sequence belongs to the SELO family. It depends on Mg(2+) as a cofactor. The cofactor is Mn(2+).

The enzyme catalyses L-seryl-[protein] + ATP = 3-O-(5'-adenylyl)-L-seryl-[protein] + diphosphate. The catalysed reaction is L-threonyl-[protein] + ATP = 3-O-(5'-adenylyl)-L-threonyl-[protein] + diphosphate. It catalyses the reaction L-tyrosyl-[protein] + ATP = O-(5'-adenylyl)-L-tyrosyl-[protein] + diphosphate. It carries out the reaction L-histidyl-[protein] + UTP = N(tele)-(5'-uridylyl)-L-histidyl-[protein] + diphosphate. The enzyme catalyses L-seryl-[protein] + UTP = O-(5'-uridylyl)-L-seryl-[protein] + diphosphate. The catalysed reaction is L-tyrosyl-[protein] + UTP = O-(5'-uridylyl)-L-tyrosyl-[protein] + diphosphate. Functionally, nucleotidyltransferase involved in the post-translational modification of proteins. It can catalyze the addition of adenosine monophosphate (AMP) or uridine monophosphate (UMP) to a protein, resulting in modifications known as AMPylation and UMPylation. In Cupriavidus metallidurans (strain ATCC 43123 / DSM 2839 / NBRC 102507 / CH34) (Ralstonia metallidurans), this protein is Protein nucleotidyltransferase YdiU.